A 1134-amino-acid polypeptide reads, in one-letter code: RNA-binding protein NAB6 (1134 aa).

Ser2 bears the N-acetylserine mark. Disordered regions lie at residues 112 to 133 (RPVS…NTNN), 151 to 173 (RNNN…RNNS), and 464 to 491 (SVPS…SGIT). Low complexity-rich tracts occupy residues 115–133 (SNHN…NTNN) and 151–164 (RNNN…HNNN). Phosphoserine is present on residues Ser464 and Ser467. Residues 471–489 (GNNNDSNNNGNNNKSNMSG) are compositionally biased toward low complexity. In terms of domain architecture, RRM spans 653–726 (RTIYIGNINP…NMLRVGWGHY (74 aa)). 2 disordered regions span residues 918–959 (LDAH…FGGL) and 1043–1092 (NYRS…GSFA). The segment covering 1057–1081 (STLSYNHSKNNETPMQDIFTNGETA) has biased composition (polar residues). Positions 1083 to 1092 (NRKKKRGSFA) are enriched in basic residues.

Its subcellular location is the cytoplasm. Its function is as follows. RNA-binding protein that associates with mRNAs encoding cell wall proteins. This is RNA-binding protein NAB6 (NAB6) from Saccharomyces cerevisiae (strain ATCC 204508 / S288c) (Baker's yeast).